A 654-amino-acid polypeptide reads, in one-letter code: Fructose-1,6-bisphosphatase class 3 (654 aa).

The tract at residues 288–307 is disordered; sequence NPAFKPKKRPDKHERLTQRE. Residues 298–307 are compositionally biased toward basic and acidic residues; sequence DKHERLTQRE.

The protein belongs to the FBPase class 3 family. Mn(2+) is required as a cofactor.

It carries out the reaction beta-D-fructose 1,6-bisphosphate + H2O = beta-D-fructose 6-phosphate + phosphate. Its pathway is carbohydrate biosynthesis; gluconeogenesis. This Staphylococcus aureus (strain bovine RF122 / ET3-1) protein is Fructose-1,6-bisphosphatase class 3.